The primary structure comprises 2040 residues: Apolipoprotein(a) (2040 aa).

Residues 1–19 (MEHKEVVLLLLLFLKSAAP) form the signal peptide. Kringle domains follow at residues 27–105 (DCYH…LTQC), 141–219 (ECYH…LTQC), 255–333 (ECYH…LTQC), 369–447 (ECYH…LTQC), 483–561 (ECYH…LTQC), 597–675 (ECYH…LTQC), 711–789 (ECYH…LTQC), 825–903 (ECYH…LTQC), 939–1017 (ECYH…LTRC), and 1053–1131 (DCYY…LTQC). 30 cysteine pairs are disulfide-bonded: cysteine 28–cysteine 105, cysteine 49–cysteine 88, cysteine 77–cysteine 100, cysteine 142–cysteine 219, cysteine 163–cysteine 202, cysteine 191–cysteine 214, cysteine 256–cysteine 333, cysteine 277–cysteine 316, cysteine 305–cysteine 328, cysteine 370–cysteine 447, cysteine 391–cysteine 430, cysteine 419–cysteine 442, cysteine 484–cysteine 561, cysteine 505–cysteine 544, cysteine 533–cysteine 556, cysteine 598–cysteine 675, cysteine 619–cysteine 658, cysteine 647–cysteine 670, cysteine 712–cysteine 789, cysteine 733–cysteine 772, cysteine 761–cysteine 784, cysteine 826–cysteine 903, cysteine 847–cysteine 886, cysteine 875–cysteine 898, cysteine 940–cysteine 1017, cysteine 961–cysteine 1000, cysteine 989–cysteine 1012, cysteine 1054–cysteine 1131, cysteine 1075–cysteine 1114, and cysteine 1103–cysteine 1126. Asparagine 61 is a glycosylation site (N-linked (GlcNAc...) asparagine). Asparagine 101 carries N-linked (GlcNAc...) asparagine glycosylation. A glycan (N-linked (GlcNAc...) asparagine) is linked at asparagine 215. N-linked (GlcNAc...) asparagine glycosylation is present at asparagine 329. Asparagine 443 carries N-linked (GlcNAc...) asparagine glycosylation. Asparagine 557 carries an N-linked (GlcNAc...) asparagine glycan. N-linked (GlcNAc...) asparagine glycosylation occurs at asparagine 671. N-linked (GlcNAc...) asparagine glycosylation occurs at asparagine 785. An N-linked (GlcNAc...) asparagine glycan is attached at asparagine 899. Asparagine 1013 carries N-linked (GlcNAc...) asparagine glycosylation. Asparagine 1127 carries an N-linked (GlcNAc...) asparagine glycan. Positions 1147–1166 (DPSTEASSEEAPTEQSPGVQ) are disordered. Kringle domains follow at residues 1167–1245 (DCYH…LTQC) and 1273–1351 (DCYH…LTQC). Intrachain disulfides connect cysteine 1168-cysteine 1245, cysteine 1189-cysteine 1228, cysteine 1217-cysteine 1240, cysteine 1274-cysteine 1351, cysteine 1295-cysteine 1334, and cysteine 1323-cysteine 1346. Residue asparagine 1241 is glycosylated (N-linked (GlcNAc...) asparagine). N-linked (GlcNAc...) asparagine glycans are attached at residues asparagine 1347 and asparagine 1381. Positions 1365–1388 (VPVPSTELPSEEAPTENSTGVQDC) are disordered. Positions 1387 to 1465 (DCYRGDGQSY…RWEYCNLTRC (79 aa)) constitute a Kringle 13 domain. 3 disulfide bridges follow: cysteine 1388/cysteine 1465, cysteine 1409/cysteine 1448, and cysteine 1437/cysteine 1460. Residue asparagine 1461 is glycosylated (N-linked (GlcNAc...) asparagine). Positions 1476–1497 (PTVAPVPSTEAPSEQAPPEKSP) are disordered. 3 Kringle domains span residues 1501-1579 (DCYH…LTQC), 1615-1693 (QCYH…LTRC), and 1719-1799 (DCMF…IPLC). Intrachain disulfides connect cysteine 1502-cysteine 1579, cysteine 1523-cysteine 1562, cysteine 1551-cysteine 1574, cysteine 1616-cysteine 1693, cysteine 1637-cysteine 1676, cysteine 1665-cysteine 1688, cysteine 1720-cysteine 1799, cysteine 1741-cysteine 1782, cysteine 1770-cysteine 1794, and cysteine 1846-cysteine 1862. Asparagine 1575 carries an N-linked (GlcNAc...) asparagine glycan. N-linked (GlcNAc...) asparagine glycosylation occurs at asparagine 1689. Residues 1820–2038 (IVGGCVAHPH…FVTWIEGMMR (219 aa)) enclose the Peptidase S1 domain. Active-site charge relay system residues include histidine 1861 and aspartate 1904. 3 disulfide bridges follow: cysteine 1938-cysteine 1996, cysteine 1968-cysteine 1975, and cysteine 1986-cysteine 2014. Residue serine 1990 is the Charge relay system of the active site.

Belongs to the peptidase S1 family. Plasminogen subfamily. In terms of assembly, disulfide-linked to apo-B100. Binds to fibronectin and decorin. In terms of processing, N- and O-glycosylated. The N-glycans are complex biantennary structures present in either a mono- or disialylated state. The O-glycans are mostly (80%) represented by the monosialylated core type I structure, NeuNAcalpha2-3Galbeta1-3GalNAc, with smaller amounts of disialylated and non-sialylated O-glycans also detected.

In terms of biological role, apo(a) is the main constituent of lipoprotein(a) (Lp(a)). It has serine proteinase activity and is able of autoproteolysis. Inhibits tissue-type plasminogen activator 1. Lp(a) may be a ligand for megalin/Gp 330. This chain is Apolipoprotein(a) (LPA), found in Homo sapiens (Human).